A 1755-amino-acid polypeptide reads, in one-letter code: Transposon Ty1-ML2 Gag-Pol polyprotein (1755 aa).

Positions 1–16 (MESQQLSQHSHISHGS) are enriched in low complexity. Disordered stretches follow at residues 1–93 (MESQ…MMTQ), 126–173 (PQSQ…RPPP), and 352–421 (GSRN…SKST). 2 stretches are compositionally biased toward polar residues: residues 48–60 (TKANSQQTTTPAS) and 127–152 (QSQFPQYPSSVGTPLSTPSPESGNTF). Over residues 153–165 (TDSSSADSDMTST) the composition is skewed to low complexity. Residues 299–401 (NNGIHINNKV…NSKSKTARAH (103 aa)) form an RNA-binding region. The segment covering 402–418 (NVSTSNNSPSTDNDSIS) has biased composition (low complexity). Ser416 is modified (phosphoserine). Asp461 (for protease activity; shared with dimeric partner) is an active-site residue. Residues 583–640 (NVHTSESTRKYPYPFIHRMLAHANAQTIRYSLKNNTITYFNESDVDRSSAIDYQCPDC) form an integrase-type zinc finger-like region. The 176-residue stretch at 660-835 (NSYEPFQYLH…AGLDISTLLP (176 aa)) folds into the Integrase catalytic domain. Residues Asp671 and Asp736 each contribute to the Mg(2+) site. 3 disordered regions span residues 956–1087 (SKAV…ETEK), 1092–1111 (RSPSIDASPPENNSSHNIVP), and 1130–1171 (DLPL…DSNA). Residues 960–969 (SPTDSTPPST) are compositionally biased toward low complexity. A compositionally biased stretch (polar residues) spans 1005 to 1015 (STPQISNIEST). Residues 1038–1053 (ESSHASKSKDFRHSDS) show a composition bias toward basic and acidic residues. Composition is skewed to polar residues over residues 1054–1082 (YSENETNHTNVPISSTGGTNNKTVPQISD) and 1101–1111 (PENNSSHNIVP). The Bipartite nuclear localization signal signature appears at 1178–1212 (KKRSLEDNETEIKVSRDTWNTKNMRSLEPPRSKKR). The 139-residue stretch at 1338–1476 (NNYYITQLDI…DILGLEIKYQ (139 aa)) folds into the Reverse transcriptase Ty1/copia-type domain. Mg(2+)-binding residues include Asp1346, Asp1427, Asp1428, Asp1610, Glu1652, and Asp1685. An RNase H Ty1/copia-type domain is found at 1610–1752 (DASYGNQPYY…IKTFKLLTNK (143 aa)).

In terms of assembly, the capsid protein forms a homotrimer, from which the VLPs are assembled. The protease is a homodimer, whose active site consists of two apposed aspartic acid residues. Post-translationally, initially, virus-like particles (VLPs) are composed of the structural unprocessed proteins Gag and Gag-Pol, and also contain the host initiator methionine tRNA (tRNA(i)-Met) which serves as a primer for minus-strand DNA synthesis, and a dimer of genomic Ty RNA. Processing of the polyproteins occurs within the particle and proceeds by an ordered pathway, called maturation. First, the protease (PR) is released by autocatalytic cleavage of the Gag-Pol polyprotein yielding capsid protein p45 and a Pol-p154 precursor protein. This cleavage is a prerequisite for subsequent processing of Pol-p154 at the remaining sites to release the mature structural and catalytic proteins. Maturation takes place prior to the RT reaction and is required to produce transposition-competent VLPs.

Its subcellular location is the cytoplasm. It is found in the nucleus. The enzyme catalyses DNA(n) + a 2'-deoxyribonucleoside 5'-triphosphate = DNA(n+1) + diphosphate. The catalysed reaction is Endonucleolytic cleavage to 5'-phosphomonoester.. Functionally, capsid protein (CA) is the structural component of the virus-like particle (VLP), forming the shell that encapsulates the retrotransposons dimeric RNA genome. The particles are assembled from trimer-clustered units and there are holes in the capsid shells that allow for the diffusion of macromolecules. CA also has nucleocapsid-like chaperone activity, promoting primer tRNA(i)-Met annealing to the multipartite primer-binding site (PBS), dimerization of Ty1 RNA and initiation of reverse transcription. The aspartyl protease (PR) mediates the proteolytic cleavages of the Gag and Gag-Pol polyproteins after assembly of the VLP. In terms of biological role, reverse transcriptase/ribonuclease H (RT) is a multifunctional enzyme that catalyzes the conversion of the retro-elements RNA genome into dsDNA within the VLP. The enzyme displays a DNA polymerase activity that can copy either DNA or RNA templates, and a ribonuclease H (RNase H) activity that cleaves the RNA strand of RNA-DNA heteroduplexes during plus-strand synthesis and hydrolyzes RNA primers. The conversion leads to a linear dsDNA copy of the retrotransposon that includes long terminal repeats (LTRs) at both ends. Its function is as follows. Integrase (IN) targets the VLP to the nucleus, where a subparticle preintegration complex (PIC) containing at least integrase and the newly synthesized dsDNA copy of the retrotransposon must transit the nuclear membrane. Once in the nucleus, integrase performs the integration of the dsDNA into the host genome. In Saccharomyces cerevisiae (strain ATCC 204508 / S288c) (Baker's yeast), this protein is Transposon Ty1-ML2 Gag-Pol polyprotein (TY1B-ML2).